Reading from the N-terminus, the 491-residue chain is MNANELTIAEARDALAKGELSAVDLTMACLTAIDAGTPLNAFVHLTPEIALDQARASDARRGEGAGALNGIPLGIKDLFCTRGVASQAASNILKGFKPEYESTVTSKLFAAGAVMLGKLNMDEFAMGSSNETSCYGDAVNPWKVDDRKLTPGGSSGGSAAAVAADLCLGATGTDTGGSIRQPAAFTGIVGIKPTYGRVSRWGIVAFASSLDQAGPMTKTVRDAAILLGAMAGHDPKDSTSADIPVPDFEAALTGDIRGKKIGIPREYRMEGMPAEIEALWAKGREMLADAGAEIVDISLPHTKYALPAYYVIAPAEASSNLARYDGVRYGHRAKLGQGDGIVDMYEKTRAEGFGKEVQRRVMIGTYVLSAGFYDAYYNRARKVRALIKRDFDQVFAEGIDAILTPATPSSAFGLGEMAHADPVEMYLNDVFTVTVNLAGLPGISVPVGLDAKGLPLGLQLIGRPWDEAGLLNHAHVLEQAAGFVEKPRKWW.

Residues lysine 76 and serine 154 each act as charge relay system in the active site. Serine 178 acts as the Acyl-ester intermediate in catalysis.

The protein belongs to the amidase family. GatA subfamily. Heterotrimer of A, B and C subunits.

It carries out the reaction L-glutamyl-tRNA(Gln) + L-glutamine + ATP + H2O = L-glutaminyl-tRNA(Gln) + L-glutamate + ADP + phosphate + H(+). Allows the formation of correctly charged Gln-tRNA(Gln) through the transamidation of misacylated Glu-tRNA(Gln) in organisms which lack glutaminyl-tRNA synthetase. The reaction takes place in the presence of glutamine and ATP through an activated gamma-phospho-Glu-tRNA(Gln). This is Glutamyl-tRNA(Gln) amidotransferase subunit A from Cereibacter sphaeroides (strain ATCC 17025 / ATH 2.4.3) (Rhodobacter sphaeroides).